Consider the following 245-residue polypeptide: 1-(5-phosphoribosyl)-5-[(5-phosphoribosylamino)methylideneamino] imidazole-4-carboxamide isomerase (245 aa).

D7 functions as the Proton acceptor in the catalytic mechanism. D129 serves as the catalytic Proton donor.

Belongs to the HisA/HisF family.

The protein resides in the cytoplasm. The enzyme catalyses 1-(5-phospho-beta-D-ribosyl)-5-[(5-phospho-beta-D-ribosylamino)methylideneamino]imidazole-4-carboxamide = 5-[(5-phospho-1-deoxy-D-ribulos-1-ylimino)methylamino]-1-(5-phospho-beta-D-ribosyl)imidazole-4-carboxamide. The protein operates within amino-acid biosynthesis; L-histidine biosynthesis; L-histidine from 5-phospho-alpha-D-ribose 1-diphosphate: step 4/9. The sequence is that of 1-(5-phosphoribosyl)-5-[(5-phosphoribosylamino)methylideneamino] imidazole-4-carboxamide isomerase from Alteromonas mediterranea (strain DSM 17117 / CIP 110805 / LMG 28347 / Deep ecotype).